Reading from the N-terminus, the 70-residue chain is Small ribosomal subunit protein bS21 (70 aa).

This sequence belongs to the bacterial ribosomal protein bS21 family.

This is Small ribosomal subunit protein bS21 from Methylobacillus flagellatus (strain ATCC 51484 / DSM 6875 / VKM B-1610 / KT).